A 290-amino-acid polypeptide reads, in one-letter code: MFRLLSSCCSCLRTTEETRRNVTIPIIGLNNSGKTVLVEAFQKLLPSKTDHCMKSELTTLLLDEYELSIYDLNGDLKGREAWPNYYAQAHGLVFVLDSSDIRRMQEVKIILTHLLSDKRVAGKPILILANKQDKKKALMPCDIIDYLLLKKLVKENKCPCRVEPCSAIRNLERRNHQPIVEGLRWLLAVIDTCQLPPTSSISISKNNTGSGERCSSHSFSTRTGMSKEKRQHLEQCSIEAKPLKSILQKEGTRLWSKKNMSVTFALDEPMKEGECSRRMRAQNTTKLCYN.

Residues 28 to 35 (GLNNSGKT), 71 to 75 (DLNGD), and 130 to 133 (NKQD) contribute to the GTP site. The disordered stretch occupies residues 204–226 (SKNNTGSGERCSSHSFSTRTGMS).

Belongs to the small GTPase superfamily. Arf family.

In Homo sapiens (Human), this protein is ADP-ribosylation factor-like protein 13A (ARL13A).